A 120-amino-acid polypeptide reads, in one-letter code: Chaperonin GroEL (120 aa).

An ATP-binding site is contributed by 23-27; it reads DGTTT.

Belongs to the chaperonin (HSP60) family. In terms of assembly, forms a cylinder of 14 subunits composed of two heptameric rings stacked back-to-back. Interacts with the co-chaperonin GroES.

It localises to the cytoplasm. The catalysed reaction is ATP + H2O + a folded polypeptide = ADP + phosphate + an unfolded polypeptide.. In terms of biological role, together with its co-chaperonin GroES, plays an essential role in assisting protein folding. The GroEL-GroES system forms a nano-cage that allows encapsulation of the non-native substrate proteins and provides a physical environment optimized to promote and accelerate protein folding. The polypeptide is Chaperonin GroEL (Mycobacterium malmoense).